Consider the following 319-residue polypeptide: CCAAT/enhancer-binding protein homolog 1 (319 aa).

The segment at 53-67 (SLTIAASLQQRDRER) is n' domain; required for axon regeneration. The interval 163-319 (TRRAVKRPVP…QRHILENFNK (157 aa)) is disordered. The segment covering 171-181 (VPYDDYQKEYS) has biased composition (basic and acidic residues). Over residues 182-198 (EESSDMTDNDGSVDDSY) the composition is skewed to acidic residues. 4 stretches are compositionally biased toward basic and acidic residues: residues 225–248 (LKAD…DAVR), 255–274 (KELQ…RIAE), 281–291 (SERDARRRDQD), and 302–319 (PMKE…NFNK). One can recognise a bZIP domain in the interval 233–308 (EPTYKLKRAR…NKGPMKEQRM (76 aa)). The segment at 237–271 (KLKRARNNDAVRKSRKKAKELQDKKEAEHDKMKRR) is basic motif. Residues 275–308 (LEGLLQSERDARRRDQDTLEQLLRNKGPMKEQRM) are leucine-zipper.

It belongs to the bZIP family. C/EBP subfamily. As to quaternary structure, may interact with transcription factor ets-4. May interact (via N-terminus) with nipi-3. May interact (via N-terminus) with importin subunit alpha ima-3. Expressed in touch and motor neurons.

It localises to the synapse. The protein resides in the cytoplasm. Its subcellular location is the nucleus. It is found in the cell projection. The protein localises to the axon. In terms of biological role, transcription factor. Binds to promoter regions of target genes, perhaps at the motif 5'-[AGCT]TT[AGT][TC]GAAA[ACT]-3'. Modulates expression of genes involved in development and in stress responses, including those regulating the p38/MAPK signaling pathways such as MAPKK sek-1 and phosphatase vhp-1. Involved in innate immunity. Plays a role in repressing the response to infection by the Gram-negative bacterium P.aeruginosa, perhaps acting independently of the pmk-1 or pmk-3 p38/MAPK pathways. However, also plays a protective role in the response to infection by P.aeruginosa. Required in axonal regrowth following injury and synaptogenesis. Following axon injury, in concert with transcription factor ets-4, activates expression of receptor tyrosine kinase svh-2. May function downstream of the Ca2+-activated p38/MAPK pathway to promote axon regeneration. Plays a role in modulating polymerization of neuronal microtubules. Involved in modulating lipid homeostasis. The protein is CCAAT/enhancer-binding protein homolog 1 of Caenorhabditis elegans.